We begin with the raw amino-acid sequence, 173 residues long: Soluble secreted antigen MPT53 (173 aa).

The first 38 residues, 1 to 38, serve as a signal peptide directing secretion; it reads MSLRLVSPIKAFADGIVAVAIAVVLMFGLANTPRAVAA. Cys73 and Cys76 are joined by a disulfide.

The protein belongs to the thioredoxin family.

Its subcellular location is the secreted. In terms of biological role, disulfide oxidoreductase that catalyzes the oxidation of reduced, unfolded secreted proteins to form disulfide bonds. Despite a weak homology to thioredoxin this cannot serve as a substrate for thioredoxin reductase. This chain is Soluble secreted antigen MPT53 (mpt53), found in Mycobacterium bovis (strain ATCC BAA-935 / AF2122/97).